The primary structure comprises 86 residues: uncharacterized protein (86 aa).

This is an uncharacterized protein from Sus scrofa (Pig).